Here is a 664-residue protein sequence, read N- to C-terminus: Two-component response regulator ARR2 (664 aa).

Residues 1 to 21 (MVNPGHGRGPDSGTAAGGSNS) are disordered. The Response regulatory domain maps to 29 to 144 (RVLVVDDDPT…ALKNIWQHVV (116 aa)). Position 80 is a 4-aspartylphosphate (Asp80). A disordered region spans residues 151–215 (WNVSEHSGGS…DDKEDSSSLK (65 aa)). A compositionally biased stretch (basic and acidic residues) spans 165–178 (GGDRDRQQQHREDA). The segment covering 180–191 (NNSSSVNEGNGR) has biased composition (polar residues). Positions 200-209 (EVDDQGDDKE) are enriched in acidic residues. A Nuclear localization signal motif is present at residues 215–218 (KKPR). Positions 218–268 (RVVWSVELHQQFVAAVNQLGVDKAVPKKILEMMNVPGLTRENVASHLQKYR) form a DNA-binding region, myb-like GARP. Over residues 554-567 (AAFSTSEAYSSSST) the composition is skewed to low complexity. The tract at residues 554–589 (AAFSTSEAYSSSSTQRKRRETDATVVGEHGQNLQSP) is disordered.

This sequence belongs to the ARR family. Type-B subfamily. In terms of assembly, binds the target DNA as a monomer. Interacts with histidine-containing phosphotransfer proteins. Two-component system major event consists of a His-to-Asp phosphorelay between a sensor histidine kinase (HK) and a response regulator (RR). In plants, the His-to-Asp phosphorelay involves an additional intermediate named Histidine-containing phosphotransfer protein (HPt). This multistep phosphorelay consists of a His-Asp-His-Asp sequential transfer of a phosphate group between first a His and an Asp of the HK protein, followed by the transfer to a conserved His of the HPt protein and finally the transfer to an Asp in the receiver domain of the RR protein. Phosphorylated in response to cytokinin mediated by AHK3. Detected in the whole plant. Predominantly expressed in pollen.

The protein resides in the nucleus. In terms of biological role, transcriptional activator that binds specifically to the DNA sequence 5'-[AG]GATT-3'. Functions as a response regulator involved in His-to-Asp phosphorelay signal transduction system. Phosphorylation of the Asp residue in the receiver domain activates the ability of the protein to promote the transcription of target genes. Could directly activate some type-A response regulators in response to cytokinins. Involved in the expression of nuclear genes for components of mitochondrial complex I. Promotes cytokinin-mediated leaf longevity. Involved in the ethylene signaling pathway in an ETR1-dependent manner and in the cytokinin signaling pathway. This Arabidopsis thaliana (Mouse-ear cress) protein is Two-component response regulator ARR2 (ARR2).